The following is a 568-amino-acid chain: Adenine deaminase (568 aa).

Belongs to the metallo-dependent hydrolases superfamily. Adenine deaminase family. Mn(2+) serves as cofactor.

The enzyme catalyses adenine + H2O + H(+) = hypoxanthine + NH4(+). In Clostridium perfringens (strain ATCC 13124 / DSM 756 / JCM 1290 / NCIMB 6125 / NCTC 8237 / Type A), this protein is Adenine deaminase.